The sequence spans 383 residues: tRNA (adenine(58)-N(1))-methyltransferase catalytic subunit TRM61 (383 aa).

S-adenosyl-L-methionine contacts are provided by residues valine 94, 121–124, glutamate 139, arginine 144, 168–169, and aspartate 203; these read SGSF and DV. Serine 302 carries the phosphoserine modification.

Belongs to the class I-like SAM-binding methyltransferase superfamily. TRM61 family. In terms of assembly, heterotetramer; composed of two copies of TRM6/GCD10 and two copies of TRM61/GCD14.

It localises to the nucleus. It carries out the reaction adenosine(58) in tRNA + S-adenosyl-L-methionine = N(1)-methyladenosine(58) in tRNA + S-adenosyl-L-homocysteine + H(+). Catalytic subunit of tRNA (adenine-N(1)-)-methyltransferase, which catalyzes the formation of N(1)-methyladenine at position 58 (m1A58) in initiator methionyl-tRNA. GCD14 is also required for repression of GCN4 mRNA translation by the upstream open reading frames (uORFs) under conditions of amino acid sufficiency. The polypeptide is tRNA (adenine(58)-N(1))-methyltransferase catalytic subunit TRM61 (GCD14) (Saccharomyces cerevisiae (strain ATCC 204508 / S288c) (Baker's yeast)).